Consider the following 107-residue polypeptide: U1-lycotoxin-Ls1d (107 aa).

Positions 1–20 (MMKVLVVVALLVTLISYSSS) are cleaved as a signal peptide. Residues 21-41 (EGIDDLEADELLSLMANEQTR) constitute a propeptide that is removed on maturation. Intrachain disulfides connect Cys-44/Cys-59, Cys-51/Cys-68, Cys-58/Cys-86, and Cys-70/Cys-84.

Belongs to the neurotoxin 19 (CSTX) family. 04 (U1-Lctx) subfamily. As to expression, expressed by the venom gland.

The protein localises to the secreted. In Lycosa singoriensis (Wolf spider), this protein is U1-lycotoxin-Ls1d.